Here is a 472-residue protein sequence, read N- to C-terminus: Glycine--tRNA ligase (472 aa).

Arginine 109 and glutamate 174 together coordinate substrate. ATP-binding positions include 206–208 (RNE), 216–221 (FRTREF), 293–294 (EL), and 337–340 (GLTR). A substrate-binding site is contributed by 221-225 (FEQME). Residue 333–337 (EPAAG) participates in substrate binding.

This sequence belongs to the class-II aminoacyl-tRNA synthetase family. As to quaternary structure, homodimer.

The protein resides in the cytoplasm. The enzyme catalyses tRNA(Gly) + glycine + ATP = glycyl-tRNA(Gly) + AMP + diphosphate. Functionally, catalyzes the attachment of glycine to tRNA(Gly). The polypeptide is Glycine--tRNA ligase (Cutibacterium acnes (strain DSM 16379 / KPA171202) (Propionibacterium acnes)).